A 400-amino-acid chain; its full sequence is Mannitol-1-phosphate 5-dehydrogenase (400 aa).

Residue 12 to 23 coordinates NAD(+); sequence AVHFGAGNIGRG. Lysine 221 is a catalytic residue.

Belongs to the mannitol dehydrogenase family. As to quaternary structure, monomer.

The catalysed reaction is D-mannitol 1-phosphate + NAD(+) = beta-D-fructose 6-phosphate + NADH + H(+). Functionally, catalyzes the NAD(H)-dependent interconversion of D-fructose 6-phosphate and D-mannitol 1-phosphate in the mannitol metabolic pathway. The chain is Mannitol-1-phosphate 5-dehydrogenase from Pyricularia oryzae (strain Y34) (Rice blast fungus).